Here is a 999-residue protein sequence, read N- to C-terminus: Hypoxia up-regulated protein 1 (999 aa).

The N-terminal stretch at 1 to 32 (MAATVRRQRPRRLLCWTLVAVLLADLLALSDT) is a signal peptide. Residues Asn-155, Asn-222, and Asn-515 are each glycosylated (N-linked (GlcNAc...) asparagine). Residues 564–694 (VEDSPEEEST…KKQKPARKQK (131 aa)) are disordered. Ser-567 bears the Phosphoserine mark. Residues 574–583 (LTKLGNTISS) are compositionally biased toward polar residues. Asn-596 carries an N-linked (GlcNAc...) asparagine glycan. Composition is skewed to basic and acidic residues over residues 611 to 626 (GSKD…KEET) and 641 to 670 (PKGD…EEKG). 3 N-linked (GlcNAc...) asparagine glycosylation sites follow: Asn-830, Asn-862, and Asn-869. Lys-883 carries the post-translational modification N6-acetyllysine. A disordered region spans residues 909–999 (AKFTKPRPRP…QKRSSKNDEL (91 aa)). 2 N-linked (GlcNAc...) asparagine glycosylation sites follow: Asn-922 and Asn-931. Residues 949 to 962 (EEAKPILEPDKEET) show a composition bias toward basic and acidic residues. The Prevents secretion from ER signature appears at 996 to 999 (NDEL).

The protein belongs to the heat shock protein 70 family. As to quaternary structure, part of a large chaperone multiprotein complex comprising DNAJB11, HSP90B1, HSPA5, HYOU, PDIA2, PDIA4, PDIA6, PPIB, SDF2L1, UGGT1 and very small amounts of ERP29, but not, or at very low levels, CALR nor CANX.

The protein localises to the endoplasmic reticulum lumen. In terms of biological role, has a pivotal role in cytoprotective cellular mechanisms triggered by oxygen deprivation. Promotes HSPA5/BiP-mediated ATP nucleotide exchange and thereby activates the unfolded protein response (UPR) pathway in the presence of endoplasmic reticulum stress. May play a role as a molecular chaperone and participate in protein folding. The protein is Hypoxia up-regulated protein 1 (HYOU1) of Cricetulus griseus (Chinese hamster).